The following is a 531-amino-acid chain: Apolipoprotein N-acyltransferase (531 aa).

The next 7 membrane-spanning stretches (helical) occupy residues 8–28 (IILLSGVSRTFVGFLAGLLAV), 34–54 (FGIFAAAFVSFPVLVWLIDGV), 69–89 (PAAIGWSFGFGYFLGGLWWLG), 105–125 (LTVVGLPAVLGLFYALAVVIA), 136–156 (IAALALGFGIAEWLRGFLFTG), 178–198 (VVNLSTINMLAVFVFAAPALI), and 206–226 (AGLAIAAALFTAHVAFGFYRL). One can recognise a CN hydrolase domain in the interval 243 to 493 (VQPVIDQAKK…RGVIDTILPG (251 aa)). Glu-287 (proton acceptor) is an active-site residue. Residue Lys-351 is part of the active site. The active-site Nucleophile is the Cys-405. Residues 507-527 (IFWLTTGILFLVAAISRLGFN) form a helical membrane-spanning segment.

Belongs to the CN hydrolase family. Apolipoprotein N-acyltransferase subfamily.

The protein resides in the cell inner membrane. It carries out the reaction N-terminal S-1,2-diacyl-sn-glyceryl-L-cysteinyl-[lipoprotein] + a glycerophospholipid = N-acyl-S-1,2-diacyl-sn-glyceryl-L-cysteinyl-[lipoprotein] + a 2-acyl-sn-glycero-3-phospholipid + H(+). The protein operates within protein modification; lipoprotein biosynthesis (N-acyl transfer). In terms of biological role, catalyzes the phospholipid dependent N-acylation of the N-terminal cysteine of apolipoprotein, the last step in lipoprotein maturation. The polypeptide is Apolipoprotein N-acyltransferase (Rhizobium meliloti (strain 1021) (Ensifer meliloti)).